The following is a 502-amino-acid chain: Maturase K (502 aa).

It belongs to the intron maturase 2 family. MatK subfamily.

It localises to the plastid. It is found in the chloroplast. Its function is as follows. Usually encoded in the trnK tRNA gene intron. Probably assists in splicing its own and other chloroplast group II introns. The polypeptide is Maturase K (Ehretia anacua (Sandpaper tree)).